A 116-amino-acid polypeptide reads, in one-letter code: Probable non-functional immunoglobulin kappa variable 3-7 (116 aa).

An N-terminal signal peptide occupies residues 1–21; the sequence is MEAPAQLLFLLLLWLPDTTRE. Residues 21–43 form a framework-1 region; sequence EIVMTQSPPTLSLSPGERVTLSC. Residues 22-116 enclose the Ig-like domain; sequence IVMTQSPPTL…YYCQQDYNLP (95 aa). Cysteines 43 and 109 form a disulfide. The interval 44 to 55 is complementarity-determining-1; it reads RASQSVSSSYLT. Residues 56 to 70 are framework-2; the sequence is WYQQKPGQAPRLLIY. Residues 71 to 77 form a complementarity-determining-2 region; it reads GASTRAT. The segment at 78–109 is framework-3; that stretch reads SIPARFSGSGSGTDFTLTISSLQPEDFAVYYC. Residues 110–116 form a complementarity-determining-3 region; that stretch reads QQDYNLP.

In terms of assembly, immunoglobulins are composed of two identical heavy chains and two identical light chains; disulfide-linked.

The protein resides in the secreted. Its subcellular location is the cell membrane. Functionally, probable non-functional open reading frame (ORF) of V region of the variable domain of immunoglobulin light chains. Non-functional ORF generally cannot participate in the synthesis of a productive immunoglobulin chain due to altered V-(D)-J or switch recombination and/or splicing site (at mRNA level) and/or conserved amino acid change (protein level). Immunoglobulins, also known as antibodies, are membrane-bound or secreted glycoproteins produced by B lymphocytes. In the recognition phase of humoral immunity, the membrane-bound immunoglobulins serve as receptors which, upon binding of a specific antigen, trigger the clonal expansion and differentiation of B lymphocytes into immunoglobulins-secreting plasma cells. Secreted immunoglobulins mediate the effector phase of humoral immunity, which results in the elimination of bound antigens. The antigen binding site is formed by the variable domain of one heavy chain, together with that of its associated light chain. Thus, each immunoglobulin has two antigen binding sites with remarkable affinity for a particular antigen. The variable domains are assembled by a process called V-(D)-J rearrangement and can then be subjected to somatic hypermutations which, after exposure to antigen and selection, allow affinity maturation for a particular antigen. The chain is Probable non-functional immunoglobulin kappa variable 3-7 from Homo sapiens (Human).